Consider the following 465-residue polypeptide: ATP synthase subunit beta (465 aa).

152–159 (GGAGVGKT) serves as a coordination point for ATP.

It belongs to the ATPase alpha/beta chains family. In terms of assembly, F-type ATPases have 2 components, CF(1) - the catalytic core - and CF(0) - the membrane proton channel. CF(1) has five subunits: alpha(3), beta(3), gamma(1), delta(1), epsilon(1). CF(0) has three main subunits: a(1), b(2) and c(9-12). The alpha and beta chains form an alternating ring which encloses part of the gamma chain. CF(1) is attached to CF(0) by a central stalk formed by the gamma and epsilon chains, while a peripheral stalk is formed by the delta and b chains.

It is found in the cell inner membrane. The catalysed reaction is ATP + H2O + 4 H(+)(in) = ADP + phosphate + 5 H(+)(out). Its function is as follows. Produces ATP from ADP in the presence of a proton gradient across the membrane. The catalytic sites are hosted primarily by the beta subunits. In Campylobacter fetus subsp. fetus (strain 82-40), this protein is ATP synthase subunit beta.